The primary structure comprises 479 residues: tRNA-2-methylthio-N(6)-dimethylallyladenosine synthase (479 aa).

Residues 3–120 (KKLYIKTWGC…LPEMVNQVSE (118 aa)) form the MTTase N-terminal domain. Residues Cys12, Cys49, Cys83, Cys157, Cys161, and Cys164 each coordinate [4Fe-4S] cluster. The 233-residue stretch at 143–375 (KADGASAFVS…QQRLNQQSMA (233 aa)) folds into the Radical SAM core domain. One can recognise a TRAM domain in the interval 378–441 (RRMLETEQRI…PNSLRGELIR (64 aa)).

Belongs to the methylthiotransferase family. MiaB subfamily. In terms of assembly, monomer. [4Fe-4S] cluster is required as a cofactor.

It is found in the cytoplasm. It catalyses the reaction N(6)-dimethylallyladenosine(37) in tRNA + (sulfur carrier)-SH + AH2 + 2 S-adenosyl-L-methionine = 2-methylsulfanyl-N(6)-dimethylallyladenosine(37) in tRNA + (sulfur carrier)-H + 5'-deoxyadenosine + L-methionine + A + S-adenosyl-L-homocysteine + 2 H(+). In terms of biological role, catalyzes the methylthiolation of N6-(dimethylallyl)adenosine (i(6)A), leading to the formation of 2-methylthio-N6-(dimethylallyl)adenosine (ms(2)i(6)A) at position 37 in tRNAs that read codons beginning with uridine. The protein is tRNA-2-methylthio-N(6)-dimethylallyladenosine synthase of Idiomarina loihiensis (strain ATCC BAA-735 / DSM 15497 / L2-TR).